The chain runs to 2040 residues: Apolipoprotein(a) (2040 aa).

The first 19 residues, 1–19, serve as a signal peptide directing secretion; sequence MEHKEVVLLLLLFLKSAAP. Kringle domains are found at residues 27 to 105, 141 to 219, 255 to 333, 369 to 447, 483 to 561, 597 to 675, 711 to 789, 825 to 903, 939 to 1017, and 1053 to 1131; these read DCYH…LTQC, ECYH…LTQC, ECYH…LTRC, and DCYY…LTQC. 30 cysteine pairs are disulfide-bonded: C28–C105, C49–C88, C77–C100, C142–C219, C163–C202, C191–C214, C256–C333, C277–C316, C305–C328, C370–C447, C391–C430, C419–C442, C484–C561, C505–C544, C533–C556, C598–C675, C619–C658, C647–C670, C712–C789, C733–C772, C761–C784, C826–C903, C847–C886, C875–C898, C940–C1017, C961–C1000, C989–C1012, C1054–C1131, C1075–C1114, and C1103–C1126. N61 carries N-linked (GlcNAc...) asparagine glycosylation. Residue N101 is glycosylated (N-linked (GlcNAc...) asparagine). N215 is a glycosylation site (N-linked (GlcNAc...) asparagine). The N-linked (GlcNAc...) asparagine glycan is linked to N329. Residue N443 is glycosylated (N-linked (GlcNAc...) asparagine). N557 is a glycosylation site (N-linked (GlcNAc...) asparagine). N671 is a glycosylation site (N-linked (GlcNAc...) asparagine). A glycan (N-linked (GlcNAc...) asparagine) is linked at N785. N899 carries N-linked (GlcNAc...) asparagine glycosylation. An N-linked (GlcNAc...) asparagine glycan is attached at N1013. N1127 carries N-linked (GlcNAc...) asparagine glycosylation. A disordered region spans residues 1147–1166; sequence DPSTEASSEEAPTEQSPGVQ. Kringle domains follow at residues 1167–1245 and 1273–1351; these read DCYH…LTQC. 6 cysteine pairs are disulfide-bonded: C1168–C1245, C1189–C1228, C1217–C1240, C1274–C1351, C1295–C1334, and C1323–C1346. N-linked (GlcNAc...) asparagine glycosylation is present at N1241. N-linked (GlcNAc...) asparagine glycans are attached at residues N1347 and N1381. Positions 1365-1388 are disordered; that stretch reads VPVPSTELPSEEAPTENSTGVQDC. In terms of domain architecture, Kringle 13 spans 1387–1465; that stretch reads DCYRGDGQSY…RWEYCNLTRC (79 aa). Intrachain disulfides connect C1388–C1465, C1409–C1448, and C1437–C1460. The N-linked (GlcNAc...) asparagine glycan is linked to N1461. The tract at residues 1476–1497 is disordered; sequence PTVAPVPSTEAPSEQAPPEKSP. 3 consecutive Kringle domains span residues 1501–1579, 1615–1693, and 1719–1799; these read DCYH…LTQC, QCYH…LTRC, and DCMF…IPLC. Disulfide bonds link C1502/C1579, C1523/C1562, C1551/C1574, C1616/C1693, C1637/C1676, C1665/C1688, C1720/C1799, C1741/C1782, C1770/C1794, and C1846/C1862. N-linked (GlcNAc...) asparagine glycosylation is present at N1575. A glycan (N-linked (GlcNAc...) asparagine) is linked at N1689. One can recognise a Peptidase S1 domain in the interval 1820–2038; it reads IVGGCVAHPH…FVTWIEGMMR (219 aa). Residues H1861 and D1904 each act as charge relay system in the active site. 3 disulfide bridges follow: C1938–C1996, C1968–C1975, and C1986–C2014. Residue S1990 is the Charge relay system of the active site.

Belongs to the peptidase S1 family. Plasminogen subfamily. Disulfide-linked to apo-B100. Binds to fibronectin and decorin. Post-translationally, N- and O-glycosylated. The N-glycans are complex biantennary structures present in either a mono- or disialylated state. The O-glycans are mostly (80%) represented by the monosialylated core type I structure, NeuNAcalpha2-3Galbeta1-3GalNAc, with smaller amounts of disialylated and non-sialylated O-glycans also detected.

In terms of biological role, apo(a) is the main constituent of lipoprotein(a) (Lp(a)). It has serine proteinase activity and is able of autoproteolysis. Inhibits tissue-type plasminogen activator 1. Lp(a) may be a ligand for megalin/Gp 330. This Homo sapiens (Human) protein is Apolipoprotein(a) (LPA).